A 138-amino-acid chain; its full sequence is Drosulfakinins (138 aa).

The N-terminal stretch at 1–33 (MGLRSCTHFATLVMPLWALAFCFLVLVPVPAQT) is a signal peptide. Positions 34-73 (TSLQISKGDRRLQDLESNMGAESDQPNANLVGTSLSRFGD) are excised as a propeptide. Phe82 is subject to Phenylalanine amide. A propeptide spanning residues 86–108 (VPRPIIPIELDLLMDNDDENTKA) is cleaved from the precursor. A Sulfotyrosine modification is found at Tyr114. Phenylalanine amide is present on Phe119. Residue Tyr131 is modified to Sulfotyrosine. Position 136 is a phenylalanine amide (Phe136).

This sequence belongs to the gastrin/cholecystokinin family.

It localises to the secreted. Drosulfakinin-0 (DSK 0) plays diverse biological roles including regulating gut muscle contraction in adults but not in larvae. The sequence is that of Drosulfakinins from Drosophila teissieri (Fruit fly).